The chain runs to 182 residues: Oligoribonuclease (182 aa).

The region spanning 8–171 is the Exonuclease domain; that stretch reads LIWLDMEMTG…ADIHESIGEL (164 aa). The active site involves Tyr129.

Belongs to the oligoribonuclease family.

The protein localises to the cytoplasm. Its function is as follows. 3'-to-5' exoribonuclease specific for small oligoribonucleotides. This is Oligoribonuclease from Azoarcus sp. (strain BH72).